A 167-amino-acid chain; its full sequence is Protein-lysine myristoyltransferase RtxC (167 aa).

Residues histidine 20 and aspartate 89 contribute to the active site.

Belongs to the RTX toxin acyltransferase family.

It localises to the cytoplasm. It catalyses the reaction tetradecanoyl-[ACP] + L-lysyl-[protein] = N(6)-tetradecanoyl-L-lysyl-[protein] + holo-[ACP] + H(+). Its function is as follows. Protein-lysine myristoyltransferase that catalyzes myristoylation of the protoxin (RtxA) at two internal lysine residues, thereby converting it to the active toxin. This is Protein-lysine myristoyltransferase RtxC from Kingella kingae.